The sequence spans 281 residues: NADPH-dependent 7-cyano-7-deazaguanine reductase (281 aa).

88–90 (VES) provides a ligand contact to substrate. 90–91 (SK) lines the NADPH pocket. The active-site Thioimide intermediate is the cysteine 189. Aspartate 196 functions as the Proton donor in the catalytic mechanism. 228–229 (HE) serves as a coordination point for substrate. 257–258 (RG) is an NADPH binding site.

The protein belongs to the GTP cyclohydrolase I family. QueF type 2 subfamily. In terms of assembly, homodimer.

The protein localises to the cytoplasm. The catalysed reaction is 7-aminomethyl-7-carbaguanine + 2 NADP(+) = 7-cyano-7-deazaguanine + 2 NADPH + 3 H(+). Its pathway is tRNA modification; tRNA-queuosine biosynthesis. Catalyzes the NADPH-dependent reduction of 7-cyano-7-deazaguanine (preQ0) to 7-aminomethyl-7-deazaguanine (preQ1). The sequence is that of NADPH-dependent 7-cyano-7-deazaguanine reductase from Klebsiella pneumoniae subsp. pneumoniae (strain ATCC 700721 / MGH 78578).